A 398-amino-acid polypeptide reads, in one-letter code: FK506-binding protein 4 (398 aa).

Disordered regions lie at residues E66 to E120, V164 to K232, and D245 to K288. A compositionally biased stretch (acidic residues) spans E170–E228. Positions P264–N287 are enriched in basic and acidic residues. The PPIase FKBP-type domain occupies G312–K398.

It belongs to the FKBP-type PPIase family. FKBP3/4 subfamily. In terms of assembly, binds to histones H3 and H4.

The protein resides in the nucleus. It catalyses the reaction [protein]-peptidylproline (omega=180) = [protein]-peptidylproline (omega=0). Its activity is regulated as follows. Inhibited by both FK506 and rapamycin. PPIase that acts as a histone chaperone. Histone proline isomerase that increases the rate of cis-trans isomerization at prolines on the histone H3 N-terminal tail. Proline isomerization influences H3 methylation thereby regulating gene expression. The sequence is that of FK506-binding protein 4 (FPR4) from Candida glabrata (strain ATCC 2001 / BCRC 20586 / JCM 3761 / NBRC 0622 / NRRL Y-65 / CBS 138) (Yeast).